Reading from the N-terminus, the 126-residue chain is Aspartate 1-decarboxylase (126 aa).

Catalysis depends on Ser-25, which acts as the Schiff-base intermediate with substrate; via pyruvic acid. At Ser-25 the chain carries Pyruvic acid (Ser). Position 57 (Thr-57) interacts with substrate. Tyr-58 functions as the Proton donor in the catalytic mechanism. 73 to 75 provides a ligand contact to substrate; that stretch reads GAA.

The protein belongs to the PanD family. In terms of assembly, heterooctamer of four alpha and four beta subunits. Requires pyruvate as cofactor. In terms of processing, is synthesized initially as an inactive proenzyme, which is activated by self-cleavage at a specific serine bond to produce a beta-subunit with a hydroxyl group at its C-terminus and an alpha-subunit with a pyruvoyl group at its N-terminus.

The protein resides in the cytoplasm. The enzyme catalyses L-aspartate + H(+) = beta-alanine + CO2. The protein operates within cofactor biosynthesis; (R)-pantothenate biosynthesis; beta-alanine from L-aspartate: step 1/1. In terms of biological role, catalyzes the pyruvoyl-dependent decarboxylation of aspartate to produce beta-alanine. This chain is Aspartate 1-decarboxylase, found in Serratia proteamaculans (strain 568).